We begin with the raw amino-acid sequence, 80 residues long: Secreted transmembrane peptide 3 (80 aa).

The first 27 residues, 1 to 27 (MGLKMSSNALLLSLFLLLLCLFSEIGG), serve as a signal peptide directing secretion. The disordered stretch occupies residues 44–80 (IATPPSLTCGGQRLGGPQPRLSPCPRPRPRPRPRTGS). Positions 62–80 (PRLSPCPRPRPRPRPRTGS) match the SCOOP motif motif. Over residues 70 to 80 (PRPRPRPRTGS) the composition is skewed to basic residues.

It belongs to the serine rich endogenous peptide (SCOOP) phytocytokine family. As to quaternary structure, interacts with MIK2 (via extracellular leucine-rich repeat domain); this interaction triggers the formation of complex between MIK2 and the BAK1/SERK3 and SERK4 coreceptors, and subsequent BAK1 activation by phosphorylation. In terms of tissue distribution, mostly expressed in leaves, and, to a lower extent, in roots, stems, siliques, seeds and flowers.

It localises to the cell membrane. The protein localises to the secreted. The protein resides in the extracellular space. Its subcellular location is the apoplast. It is found in the endoplasmic reticulum. It localises to the golgi apparatus. Functionally, brassicaceae-specific phytocytokine (plant endogenous peptide released into the apoplast) perceived by MIK2 in a BAK1/SERK3 and SERK4 coreceptors-dependent manner, that modulates various physiological and antimicrobial processes including growth prevention and reactive oxygen species (ROS) response regulation. The polypeptide is Secreted transmembrane peptide 3 (Arabidopsis thaliana (Mouse-ear cress)).